The sequence spans 525 residues: Protein-export membrane protein SecD (525 aa).

Transmembrane regions (helical) follow at residues 16-36 (VLLL…KGLT), 368-388 (QAII…YFHY), 395-415 (IPVA…AALI), 421-441 (LPSI…QIVI), 466-486 (AFFI…FLLV), and 488-508 (FVGT…IGVL).

The protein belongs to the SecD/SecF family. SecD subfamily. In terms of assembly, part of the protein translocation apparatus. Forms a complex with SecF.

It localises to the cell membrane. Involved in protein export. The polypeptide is Protein-export membrane protein SecD (Thermococcus gammatolerans (strain DSM 15229 / JCM 11827 / EJ3)).